The primary structure comprises 386 residues: Latent membrane protein 1 (386 aa).

Residues 1-23 (MEHDLERGPPGPRRPPRGPPLSS) are Cytoplasmic-facing. Residues 24–44 (SLGLALLLLLLALLFWLYIVM) traverse the membrane as a helical segment. Topologically, residues 45 to 51 (SDWTGGA) are extracellular. Residues 52 to 72 (LLVLYSFALMLIIIILIIFIF) form a helical membrane-spanning segment. The Cytoplasmic portion of the chain corresponds to 73–75 (RRD). The helical transmembrane segment at 76–96 (LLCPLGALCILLLMITLLLIA) threads the bilayer. Residues 97–106 (LWNLHGQALF) are Extracellular-facing. Residues 107 to 127 (LGIVLFIFGCLLVLGIWIYLL) form a helical membrane-spanning segment. Residues 128–139 (EMLWRLGATIWQ) lie on the Cytoplasmic side of the membrane. A helical membrane pass occupies residues 140-160 (LLAFFLAFFLDLILLIIALYL). Residues 161 to 163 (QQN) lie on the Extracellular side of the membrane. A helical transmembrane segment spans residues 164 to 184 (WWTLLVDLLWLLLFLAILIWM). Residues 185–386 (YYHGQRHSDE…HGPVQLSYYD (202 aa)) lie on the Cytoplasmic side of the membrane. The CTAR1 stretch occupies residues 194-232 (EHHHDDSLPHPQQATDDSGHESDSNSNEGRHHLLVSGAG). Residues 194–386 (EHHHDDSLPH…HGPVQLSYYD (193 aa)) form a disordered region. The Interaction with host TRAF proteins signature appears at 204–208 (PQQAT). Positions 210 to 224 (DSGHESDSNSNEGRH) are enriched in basic and acidic residues. Over residues 251-267 (NGPQDPDNTDDNGPQDP) the composition is skewed to low complexity. Residues 351–386 (GHGGGDPHLPTLLLGSSGSGGDDDDPHGPVQLSYYD) form a CTAR2 region.

The protein belongs to the herpesviridae LMP-1 family. As to quaternary structure, interacts (via PXQXT motif) with host tumor necrosis factor receptor-associated factor (TRAF) proteins TRAF1, TRAF2, TRAF3 and TRAF5. Interacts with human protein ZMYND11; leading to negatively regulate NF-kappa-B activation. Interacts with host UBE2I; this interaction induces the sumoylation of various cellular proteins. Interacts with host IRF7. Interacts with host TYK2. Post-translationally, ubiquitinated on the N-terminus.

The protein localises to the host cell membrane. Its function is as follows. Acts as a CD40 functional homolog to prevent apoptosis of infected B-lymphocytes and drive their proliferation. Functions as a constitutively active tumor necrosis factor receptor that induces the activation of several signaling pathways, including those of the NF-kappa-B family. LMP1 signaling leads to up-regulation of antiapoptotic proteins and provide growth signals in latently infected cells. Interacts with host UBE2I and subsequently affects the sumoylation state of several cellular proteins. For example, induces the sumoylation of host IRF7 thereby limiting its transcriptional activity and modulating the activation of innate immune responses. Also inhibits host IFN-alpha-stimulated STAT2 nuclear translocation and interferon-stimulated response element transcriptional activity by interacting with and inhibiting host TYK2. Induces SUMO expression during viral latency thereby dysregulating the host sumoylation processes. This Epstein-Barr virus (strain B95-8) (HHV-4) protein is Latent membrane protein 1 (LMP1).